The chain runs to 878 residues: Phosphoenolpyruvate carboxylase (878 aa).

Residues histidine 138 and lysine 545 contribute to the active site.

The protein belongs to the PEPCase type 1 family. It depends on Mg(2+) as a cofactor.

The catalysed reaction is oxaloacetate + phosphate = phosphoenolpyruvate + hydrogencarbonate. Functionally, forms oxaloacetate, a four-carbon dicarboxylic acid source for the tricarboxylic acid cycle. The chain is Phosphoenolpyruvate carboxylase from Shewanella sediminis (strain HAW-EB3).